The following is a 334-amino-acid chain: Procathepsin L (334 aa).

The N-terminal stretch at 1 to 17 (MTPLLLLAVLCLGTALA) is a signal peptide. Residues 18–113 (TPKFDQTFNA…RLFQEPLMLQ (96 aa)) constitute a propeptide, activation peptide. Glutamate 122 provides a ligand contact to Zn(2+). 2 disulfides stabilise this stretch: cysteine 135–cysteine 178 and cysteine 169–cysteine 211. Residue cysteine 138 is part of the active site. Zn(2+) contacts are provided by glutamate 163, aspartate 184, glutamate 199, glutamate 205, aspartate 227, aspartate 250, histidine 253, aspartate 273, and aspartate 275. Residues cysteine 269 and cysteine 322 are joined by a disulfide bond. The active site involves histidine 276. Residues 289 to 290 (DS) constitute a propeptide that is removed on maturation. The active site involves asparagine 300.

This sequence belongs to the peptidase C1 family. In terms of assembly, dimer of a heavy and a light chain linked by disulfide bonds. Interacts with Long isoform of CD74/Ii chain; the interaction stabilizes the conformation of mature CTSL. Post-translationally, during export along the endocytic pathway, pro-CTSL undergoes several proteolytic cleavages to generate the CTSL single-chain and two-chain mature forms, composed of a heavy chain linked to a light chain by disulfide bonds. Autocleavage; produces the single-chain CTSL after cleavage of the propeptide. The cleavage can be intermolecular. Both mature cathepsin L1 and procathepsin L are found in the upper epidermis. The lower epidermis predominantly contains procathepsin L. In seminiferous tubules expression is greater at stages VI-VII than at stages IX-XII.

The protein resides in the lysosome. It localises to the apical cell membrane. The protein localises to the cytoplasmic vesicle. Its subcellular location is the secretory vesicle. It is found in the chromaffin granule. The protein resides in the secreted. It localises to the extracellular space. The catalysed reaction is Specificity close to that of papain. As compared to cathepsin B, cathepsin L exhibits higher activity toward protein substrates, but has little activity on Z-Arg-Arg-NHMec, and no peptidyl-dipeptidase activity.. Inhibited by the propeptide produced by autocleavage. Long isoform of CD74/Ii chain stabilizes the conformation of mature CTSL by binding to its active site and serving as a chaperone to help maintain a pool of mature enzyme in endocytic compartments and extracellular space of APCs. IFNG enhances the conversion into the CTSL mature and active form. Inhibited by CST6. Inhibited by the glycopeptide antibiotic teicoplanin. Inhibited by amantadine. Its function is as follows. Thiol protease important for the overall degradation of proteins in lysosomes. Plays a critical for normal cellular functions such as general protein turnover, antigen processing and bone remodeling. Involved in the solubilization of cross-linked TG/thyroglobulin and in the subsequent release of thyroid hormone thyroxine (T4) by limited proteolysis of TG/thyroglobulin in the thyroid follicle lumen. In neuroendocrine chromaffin cells secretory vesicles, catalyzes the prohormone proenkephalin processing to the active enkephalin peptide neurotransmitter. In thymus, regulates CD4(+) T cell positive selection by generating the major histocompatibility complex class II (MHCII) bound peptide ligands presented by cortical thymic epithelial cells. Also mediates invariant chain processing in cortical thymic epithelial cells. Major elastin-degrading enzyme at neutral pH. Accumulates as a mature and active enzyme in the extracellular space of antigen presenting cells (APCs) to regulate degradation of the extracellular matrix in the course of inflammation. Secreted form generates endostatin from COL18A1. Critical for cardiac morphology and function. Plays an important role in hair follicle morphogenesis and cycling, as well as epidermal differentiation. Required for maximal stimulation of steroidogenesis by TIMP1. This chain is Procathepsin L, found in Rattus norvegicus (Rat).